The following is a 119-amino-acid chain: Large ribosomal subunit protein bL20c (119 aa).

Belongs to the bacterial ribosomal protein bL20 family.

It localises to the plastid. Its subcellular location is the chloroplast. In terms of biological role, binds directly to 23S ribosomal RNA and is necessary for the in vitro assembly process of the 50S ribosomal subunit. It is not involved in the protein synthesizing functions of that subunit. This is Large ribosomal subunit protein bL20c (rpl20) from Zea mays (Maize).